The following is an 820-amino-acid chain: Leucine--tRNA ligase (820 aa).

Residues 40–51 (PYPSGAGLHVGH) carry the 'HIGH' region motif. The 'KMSKS' region motif lies at 601 to 605 (KMSKS). Position 604 (Lys604) interacts with ATP.

The protein belongs to the class-I aminoacyl-tRNA synthetase family.

The protein resides in the cytoplasm. The catalysed reaction is tRNA(Leu) + L-leucine + ATP = L-leucyl-tRNA(Leu) + AMP + diphosphate. In Chlamydia felis (strain Fe/C-56) (Chlamydophila felis), this protein is Leucine--tRNA ligase.